Consider the following 365-residue polypeptide: S-adenosylmethionine:tRNA ribosyltransferase-isomerase (365 aa).

This sequence belongs to the QueA family. As to quaternary structure, monomer.

It localises to the cytoplasm. It carries out the reaction 7-aminomethyl-7-carbaguanosine(34) in tRNA + S-adenosyl-L-methionine = epoxyqueuosine(34) in tRNA + adenine + L-methionine + 2 H(+). Its pathway is tRNA modification; tRNA-queuosine biosynthesis. In terms of biological role, transfers and isomerizes the ribose moiety from AdoMet to the 7-aminomethyl group of 7-deazaguanine (preQ1-tRNA) to give epoxyqueuosine (oQ-tRNA). This chain is S-adenosylmethionine:tRNA ribosyltransferase-isomerase, found in Rickettsia peacockii (strain Rustic).